The primary structure comprises 1409 residues: DNA-directed RNA polymerase subunit beta' (1409 aa).

Positions 70, 72, 85, and 88 each coordinate Zn(2+). Mg(2+) contacts are provided by D461, D463, and D465. 4 residues coordinate Zn(2+): C820, C894, C901, and C904.

It belongs to the RNA polymerase beta' chain family. The RNAP catalytic core consists of 2 alpha, 1 beta, 1 beta' and 1 omega subunit. When a sigma factor is associated with the core the holoenzyme is formed, which can initiate transcription. Requires Mg(2+) as cofactor. It depends on Zn(2+) as a cofactor.

It catalyses the reaction RNA(n) + a ribonucleoside 5'-triphosphate = RNA(n+1) + diphosphate. Its function is as follows. DNA-dependent RNA polymerase catalyzes the transcription of DNA into RNA using the four ribonucleoside triphosphates as substrates. This chain is DNA-directed RNA polymerase subunit beta', found in Ralstonia nicotianae (strain ATCC BAA-1114 / GMI1000) (Ralstonia solanacearum).